A 181-amino-acid chain; its full sequence is Protein Ves (181 aa).

Belongs to the Ves family.

The sequence is that of Protein Ves from Cronobacter sakazakii (strain ATCC BAA-894) (Enterobacter sakazakii).